Reading from the N-terminus, the 120-residue chain is uncharacterized protein (120 aa).

This is an uncharacterized protein from Enterobacteria phage T4 (Bacteriophage T4).